Reading from the N-terminus, the 360-residue chain is D-alanine--D-alanine ligase (360 aa).

An ATP-grasp domain is found at 149–353 (KKLMAAEGLP…YEELLDVLVQ (205 aa)). 176–231 (KNLLGLPVFVKPARGGSSIGISRVTAWEDFNKAVGLARAHDEKVIVESEIVGSEVE) is an ATP binding site. Residues Asp-308, Glu-320, and Asn-322 each contribute to the Mg(2+) site.

It belongs to the D-alanine--D-alanine ligase family. Mg(2+) is required as a cofactor. Requires Mn(2+) as cofactor.

Its subcellular location is the cytoplasm. The catalysed reaction is 2 D-alanine + ATP = D-alanyl-D-alanine + ADP + phosphate + H(+). It participates in cell wall biogenesis; peptidoglycan biosynthesis. In terms of biological role, cell wall formation. The protein is D-alanine--D-alanine ligase of Corynebacterium glutamicum (strain R).